A 249-amino-acid polypeptide reads, in one-letter code: MADGANDGGNPGAEEQQRLLDQHKEAHFTAGEIVRDIIIGVSDGLTVPFALAAGLSGANASSSIVLTAGIAEVAAGAISMGLGGYLAAKSEADNYARELKREQEEIIRVPDTEAAEVAEILARYGIEPHEYGPVVNALRKKPQAWLDFMMKFELGLEKPDPKRALQSAFTIAIAYVLGGLVPLIPYMFIPVARKAVVASVILTLMALLIFGYAKGYFTDNKPFKSALQTALIGAIASAAAFGMAKAVQS.

At 1–36 (MADGANDGGNPGAEEQQRLLDQHKEAHFTAGEIVRD) the chain is on the cytoplasmic side. A helical membrane pass occupies residues 37–57 (IIIGVSDGLTVPFALAAGLSG). The Vacuolar portion of the chain corresponds to 58 to 63 (ANASSS). Residues 64–84 (IVLTAGIAEVAAGAISMGLGG) traverse the membrane as a helical segment. Residues 85-170 (YLAAKSEADN…PKRALQSAFT (86 aa)) are Cytoplasmic-facing. Residues 90–165 (SEADNYAREL…LEKPDPKRAL (76 aa)) are cytoplasmic metal binding domain (MBD). Glu102, Glu105, Glu113, Glu116, Met149, and Glu153 together coordinate Fe cation. Residues 171–191 (IAIAYVLGGLVPLIPYMFIPV) form a helical membrane-spanning segment. Residues 192–194 (ARK) are Vacuolar-facing. Residues 195–215 (AVVASVILTLMALLIFGYAKG) form a helical membrane-spanning segment. The Cytoplasmic segment spans residues 216–226 (YFTDNKPFKSA). Residues 227–247 (LQTALIGAIASAAAFGMAKAV) form a helical membrane-spanning segment. Residues 248 to 249 (QS) lie on the Vacuolar side of the membrane.

The protein belongs to the CCC1 family. As to quaternary structure, homodimer. The dimeric interaction is mediated by both the transmembrane domains (TMDs) and the cytoplasmic metal binding domain (MBD).

It localises to the vacuole membrane. The enzyme catalyses Fe(2+)(in) = Fe(2+)(out). Its activity is regulated as follows. Transport of iron ions is inhibited by zinc ions. In terms of biological role, vacuolar iron transporter involved in the transfer of iron ions from the cytosol to the vacuole for intracellular iron storage. Can transport cobalt ions from the cytosol to the vacuole. The polypeptide is Vacuolar iron transporter 1 (Eucalyptus grandis (Flooded gum)).